The sequence spans 217 residues: Translation initiation factor IF-3 (217 aa).

Residues 179 to 217 are disordered; the sequence is PRKTPLVKKEEKEAAPTKAVRTIPAPPRPTAAKVAAQQA.

This sequence belongs to the IF-3 family. Monomer.

The protein resides in the cytoplasm. Functionally, IF-3 binds to the 30S ribosomal subunit and shifts the equilibrium between 70S ribosomes and their 50S and 30S subunits in favor of the free subunits, thus enhancing the availability of 30S subunits on which protein synthesis initiation begins. In Parasynechococcus marenigrum (strain WH8102), this protein is Translation initiation factor IF-3.